A 2038-amino-acid polypeptide reads, in one-letter code: Homeotic protein female sterile (2038 aa).

Residues 34–140 form the Bromo 1 domain; it reads RNTNQLQYLI…KVFLQKIESM (107 aa). The tract at residues 145 to 284 is disordered; it reads LELEPVTAKG…TTAMAGGVGG (140 aa). 2 stretches are compositionally biased toward low complexity: residues 177–209 and 268–279; these read GSGT…SGLQ and PGSTNTTTTAMA. A helical transmembrane segment spans residues 330-350; the sequence is AAVAAAAAAAAAAAAAAGGAA. Residues 396 to 432 are disordered; that stretch reads KGVKRKADTTTPTANAFESPYTQMDSKSAKIATRRES. Residues 404–421 show a composition bias toward polar residues; sequence TTTPTANAFESPYTQMDS. The chain crosses the membrane as a helical span at residues 451 to 471; the sequence is VSGVPGLGGLVAGGVAGVAVA. Residue Ser452 is modified to Phosphoserine. Residues 475–584 form the Bromo 2 domain; it reads EKLSDALKSC…DVFEMRYANI (110 aa). Disordered regions lie at residues 590-655 and 677-735; these read ANAA…ERSA and EASA…SVPG. Basic residues predominate over residues 593 to 619; it reads AHHHGHGHGHGHGHGHGHGHGHGHGHG. A compositionally biased stretch (acidic residues) spans 636–649; the sequence is SSEDSSDTENESNS. The span at 681–694 shows a compositional bias: basic residues; the sequence is KKKAKKKLKEKKKS. Gly residues predominate over residues 711 to 735; sequence TGGGANAGGAGGPGSGGHGSVSVPG. The next 3 helical transmembrane spans lie at 750–770, 790–810, and 816–830; these read LNAL…AGGV, MAGG…AAGA, and AGTL…AAAG. Disordered stretches follow at residues 832 to 858, 891 to 956, 1016 to 1139, 1217 to 1260, 1384 to 1416, 1502 to 1530, 1580 to 1616, 1645 to 1728, 1745 to 1918, and 1957 to 2023; these read GGTT…SGAG, AGAA…SYDE, CLRK…GGNL, AVSA…ATVA, QPAG…QQQQ, MQQM…QQQH, IESM…PNAA, WSSL…VAQA, AAAA…SGAI, and MESG…GQID. A helical transmembrane segment spans residues 874–894; it reads GAAGAAAGAGSVGGVGGAGAA. Over residues 910 to 927 the composition is skewed to gly residues; it reads GAGGGVGGANASAGGAGA. In terms of domain architecture, NET spans 942–1024; it reads DSEEEDTAKP…SCLRKKTHKK (83 aa). Ser943 carries the post-translational modification Phosphoserine. Basic residues predominate over residues 1017–1027; that stretch reads LRKKTHKKPSG. Residues 1028-1046 are compositionally biased toward basic and acidic residues; that stretch reads KSKDEQMAEKKQELEKRLQ. A compositionally biased stretch (low complexity) spans 1079–1100; it reads SSSSSSSDSSSSSSSDSSSSDS. 2 stretches are compositionally biased toward polar residues: residues 1121–1131 and 1222–1232; these read SNGSNVNNPSI and TGQQHNKNGPN. Positions 1645 to 1665 are enriched in low complexity; it reads WSSLASANSPQSHTSSSSSSS. Residue Ser1653 is modified to Phosphoserine. Residues 1680-1708 are compositionally biased toward basic and acidic residues; that stretch reads KAKERDRLKLLEAAEKEKKNQKEAAEKEQ. Low complexity-rich tracts occupy residues 1716–1728 and 1745–1760; these read SSSS…VAQA and AAAA…PSGG. Residues 1731–1751 traverse the membrane as a helical segment; sequence IAAATAAAAVTLGAAAAAALA. Residues 1776–1791 show a composition bias toward basic and acidic residues; that stretch reads GDRDRDRDRERERERS. The span at 1800 to 1813 shows a compositional bias: low complexity; the sequence is NGNNSSNSANSNGP. 2 stretches are compositionally biased toward gly residues: residues 1814–1828 and 1835–1856; these read GSAG…GGSG and PNSG…GGGP. Residues 1857-1884 show a composition bias toward low complexity; sequence ALLNAGSNSNSGVGSGGAASSNSNSSVG. Residues 1885-1915 show a composition bias toward gly residues; it reads GIVGSGGPGSNSQGSSGGGGGGPASGGGMGS. A helical transmembrane segment spans residues 1939–1959; sequence VAAAVAAQAILAASPLGAMES. Phosphoserine occurs at positions 1980 and 1988. A compositionally biased stretch (low complexity) spans 1986-1997; that stretch reads QSSPAQQSPQDR. Over residues 1998 to 2017 the composition is skewed to basic and acidic residues; that stretch reads AAAKRAEQRRAEQERRRREA.

The protein resides in the membrane. Required maternally for proper expression of other homeotic genes involved in pattern formation, such as Ubx. The chain is Homeotic protein female sterile (fs(1)h) from Drosophila melanogaster (Fruit fly).